The chain runs to 124 residues: Fluoride-specific ion channel FluC (124 aa).

4 consecutive transmembrane segments (helical) span residues 2-22 (LNIAIAVFIGGGLGSVLRWLI), 35-55 (TGTLVANCIGAFIIAFGIAWF), 71-91 (TGFCGGLTTFSTFSVEVVALF), and 100-120 (LGTMGANLAGSFLMTAFAFWL). Na(+)-binding residues include glycine 75 and threonine 78.

This sequence belongs to the fluoride channel Fluc/FEX (TC 1.A.43) family.

The protein localises to the cell inner membrane. It catalyses the reaction fluoride(in) = fluoride(out). Na(+) is not transported, but it plays an essential structural role and its presence is essential for fluoride channel function. Its function is as follows. Fluoride-specific ion channel. Important for reducing fluoride concentration in the cell, thus reducing its toxicity. The protein is Fluoride-specific ion channel FluC of Proteus mirabilis (strain HI4320).